The chain runs to 396 residues: Cytochrome c biogenesis protein Ccs1 (396 aa).

3 helical membrane passes run 22–42, 79–99, and 162–182; these read LKFSITLFIIICIVSAIGTII, SNFYLILLLCLSFSLFFCSLK, and AGPLLIHLSLILILLGSAIHA.

It belongs to the Ccs1/CcsB family. May interact with CcsA.

It is found in the plastid. The protein localises to the chloroplast thylakoid membrane. In terms of biological role, required during biogenesis of c-type cytochromes (cytochrome c6 and cytochrome f) at the step of heme attachment. This Cyanidium caldarium (Red alga) protein is Cytochrome c biogenesis protein Ccs1.